We begin with the raw amino-acid sequence, 189 residues long: Chitin synthase 1 (189 aa).

Belongs to the chitin synthase family. Class I subfamily.

Its subcellular location is the cell membrane. It carries out the reaction [(1-&gt;4)-N-acetyl-beta-D-glucosaminyl](n) + UDP-N-acetyl-alpha-D-glucosamine = [(1-&gt;4)-N-acetyl-beta-D-glucosaminyl](n+1) + UDP + H(+). Its function is as follows. Polymerizes chitin, a structural polymer of the cell wall and septum, by transferring the sugar moiety of UDP-GlcNAc to the non-reducing end of the growing chitin polymer. The chain is Chitin synthase 1 (CHS1) from Ajellomyces capsulatus (Darling's disease fungus).